An 861-amino-acid chain; its full sequence is DNA topoisomerase 1 (861 aa).

A Toprim domain is found at 3-141 (KSLVIVESPA…KFSRVVFNEI (139 aa)). E9 and D110 together coordinate Mg(2+). Residues 157–572 (NMNRVHAQQA…DFFKKFSEQL (416 aa)) form the Topo IA-type catalytic domain. Positions 191–196 (SAGRVQ) are interaction with DNA. Residue Y318 is the O-(5'-phospho-DNA)-tyrosine intermediate of the active site. 3 C4-type zinc fingers span residues 596–628 (CPICCKKMGIKTAITGVFLSCLGYNNTDNKKRC), 658–685 (CDICNMYMDSYFINEKLKLHICANNPSC), and 707–732 (CEKCYNNMKLKIGPFGKFFTCINKIC).

Belongs to the type IA topoisomerase family. In terms of assembly, monomer. The cofactor is Mg(2+).

It carries out the reaction ATP-independent breakage of single-stranded DNA, followed by passage and rejoining.. Functionally, releases the supercoiling and torsional tension of DNA, which is introduced during the DNA replication and transcription, by transiently cleaving and rejoining one strand of the DNA duplex. Introduces a single-strand break via transesterification at a target site in duplex DNA. The scissile phosphodiester is attacked by the catalytic tyrosine of the enzyme, resulting in the formation of a DNA-(5'-phosphotyrosyl)-enzyme intermediate and the expulsion of a 3'-OH DNA strand. The free DNA strand then undergoes passage around the unbroken strand, thus removing DNA supercoils. Finally, in the religation step, the DNA 3'-OH attacks the covalent intermediate to expel the active-site tyrosine and restore the DNA phosphodiester backbone. The chain is DNA topoisomerase 1 from Buchnera aphidicola subsp. Acyrthosiphon pisum (strain APS) (Acyrthosiphon pisum symbiotic bacterium).